A 610-amino-acid polypeptide reads, in one-letter code: Dopamine beta-hydroxylase (610 aa).

Residues 1 to 9 are Cytoplasmic-facing; sequence MKVPSPSVR. A helical; Signal-anchor for type II membrane protein transmembrane segment spans residues 10–30; the sequence is EAASMYGTAVAIFLVILVAAL. The Intragranular segment spans residues 31 to 610; the sequence is QGSEPPESPF…TVVDIGGGKG (580 aa). Residues 50–166 form the DOMON domain; it reads GTLELSWNVS…GTVHLVYGIL (117 aa). Asparagine 57, asparagine 177, and asparagine 194 each carry an N-linked (GlcNAc...) asparagine glycan. Cystine bridges form between cysteine 147–cysteine 589, cysteine 225–cysteine 276, cysteine 262–cysteine 288, cysteine 383–cysteine 496, cysteine 387–cysteine 558, and cysteine 459–cysteine 481. Tyrosine 223 is a catalytic residue. The Cu(2+) site is built by histidine 255 and histidine 256. Histidine 326, histidine 405, histidine 407, and methionine 480 together coordinate Cu(2+). Residue histidine 405 is part of the active site. The tract at residues 586-610 is disordered; that stretch reads TPRCPASRGRSPAGPTVVDIGGGKG.

This sequence belongs to the copper type II ascorbate-dependent monooxygenase family. As to quaternary structure, homotetramer; composed of two disulfide-linked dimers. It depends on Cu(2+) as a cofactor. In terms of processing, proteolytic cleavage after the membrane-anchor leads to the release of the soluble form. Post-translationally, N-glycosylated. As to expression, detected in adrenal medulla chromaffin cells.

The protein localises to the cytoplasmic vesicle. It is found in the secretory vesicle lumen. Its subcellular location is the secretory vesicle. It localises to the chromaffin granule lumen. The protein resides in the secreted. The protein localises to the secretory vesicle membrane. It is found in the chromaffin granule membrane. The catalysed reaction is dopamine + 2 L-ascorbate + O2 = (R)-noradrenaline + 2 monodehydro-L-ascorbate radical + H2O. It participates in catecholamine biosynthesis; (R)-noradrenaline biosynthesis; (R)-noradrenaline from dopamine: step 1/1. In terms of biological role, catalyzes the hydroxylation of dopamine to noradrenaline (also known as norepinephrine), and is thus vital for regulation of these neurotransmitters. The polypeptide is Dopamine beta-hydroxylase (DBH) (Equus caballus (Horse)).